The chain runs to 434 residues: MKSLVLKAAAWLSDLRVAIVLLLLIAACSGLGTAIPQGEPAAFYHERYDAAPWLGVVNGNQLLSWELDHLYTSNWFLLLLAWLGLALLLCSLRRQWPALRASLRWLDYTKPRQLSKLAVATSLDTGDSAAALDQLERQLQQQGWAVRRQQNRLAARRGVIGRVGPLLVHTGLIVFMVGAVVGAFGGQRLERFLAPGRSLELLNPQGDTRLELQLDSFAIQRDPAGRPEQFSSQLLLRDGTGAPAQPAAVSVNHPLRHRGITVYQADWGLAAVTMQLGQSPLLQLPLQTFPELGEQVWGLVLPTRPDGSDPVLLALQSELGPVEVYGADSQQLGLLTVGGESQEILGLPLRIADVMPASGLLIKRDPGVPLVYAGFAITLLGGGLSLIATRQLWAISESGRLHIAGLCNRNLVAFADELPKLGSSAITGAPHDAR.

3 consecutive transmembrane segments (helical) span residues 15–35, 73–93, and 163–183; these read LRVA…GTAI, SNWF…CSLR, and VGPL…VVGA.

It belongs to the Ccs1/CcsB family. May interact with CcsA.

The protein localises to the cellular thylakoid membrane. Functionally, required during biogenesis of c-type cytochromes (cytochrome c6 and cytochrome f) at the step of heme attachment. The protein is Cytochrome c biogenesis protein CcsB of Synechococcus sp. (strain RCC307).